The sequence spans 1339 residues: Tuberous sclerosis 2 protein homolog (1339 aa).

Position 1036 is a phosphoserine (Ser1036). One can recognise a Rap-GAP domain in the interval 1109-1303; the sequence is ILANTNPSED…AERLRQLKRL (195 aa).

Interacts with tsc1.

The protein localises to the cytoplasm. It localises to the nucleus. Functionally, together with tsc1, required for uptake of various amino acids from the environment and for proper conjugation. Involved in induction of gene expression of permeases and genes required for meiosis upon nitrogen starvation. May act as a GTPase-activating protein (GAP) for the small GTPase rhb1. The chain is Tuberous sclerosis 2 protein homolog (tsc2) from Schizosaccharomyces pombe (strain 972 / ATCC 24843) (Fission yeast).